The sequence spans 263 residues: Hydroxyacylglutathione hydrolase (263 aa).

H55, H57, D59, H60, H117, D134, and H172 together coordinate Zn(2+).

Belongs to the metallo-beta-lactamase superfamily. Glyoxalase II family. In terms of assembly, monomer. Requires Zn(2+) as cofactor.

It catalyses the reaction an S-(2-hydroxyacyl)glutathione + H2O = a 2-hydroxy carboxylate + glutathione + H(+). Its pathway is secondary metabolite metabolism; methylglyoxal degradation; (R)-lactate from methylglyoxal: step 2/2. Its function is as follows. Thiolesterase that catalyzes the hydrolysis of S-D-lactoyl-glutathione to form glutathione and D-lactic acid. The protein is Hydroxyacylglutathione hydrolase of Shewanella baltica (strain OS223).